The chain runs to 488 residues: 3-octaprenyl-4-hydroxybenzoate carboxy-lyase (488 aa).

Asn172 is a binding site for Mn(2+). Prenylated FMN is bound by residues 175–177 (IYR), 189–191 (RWL), and 194–195 (RG). Mn(2+) is bound at residue Glu238. The active-site Proton donor is Asp287.

This sequence belongs to the UbiD family. In terms of assembly, homohexamer. Prenylated FMN is required as a cofactor. It depends on Mn(2+) as a cofactor.

Its subcellular location is the cell membrane. It carries out the reaction a 4-hydroxy-3-(all-trans-polyprenyl)benzoate + H(+) = a 2-(all-trans-polyprenyl)phenol + CO2. Its pathway is cofactor biosynthesis; ubiquinone biosynthesis. Functionally, catalyzes the decarboxylation of 3-octaprenyl-4-hydroxy benzoate to 2-octaprenylphenol, an intermediate step in ubiquinone biosynthesis. This Alteromonas mediterranea (strain DSM 17117 / CIP 110805 / LMG 28347 / Deep ecotype) protein is 3-octaprenyl-4-hydroxybenzoate carboxy-lyase.